The sequence spans 369 residues: Chanoclavine-I aldehyde reductase fgaOx3 (369 aa).

FMN contacts are provided by residues 23-25, Ala58, Gln100, and His169; that span reads PMT. 2 residues coordinate substrate: His169 and Asn172. Tyr174 functions as the Proton donor in the catalytic mechanism. FMN is bound by residues Gly292, 316-317, and Arg317; that span reads GR. Tyr344 is a binding site for substrate.

The protein belongs to the NADH:flavin oxidoreductase/NADH oxidase family. In terms of assembly, monomer. FMN serves as cofactor.

It catalyses the reaction dihydrochanoclavine-I aldehyde + NADP(+) = chanoclavine-I aldehyde + NADPH + H(+). Its pathway is alkaloid biosynthesis; ergot alkaloid biosynthesis. In terms of biological role, chanoclavine-I aldehyde reductase; part of the gene cluster that mediates the biosynthesis of isofumigaclavines, fungal ergot alkaloids. The tryptophan dimethylallyltransferase ifgA catalyzes the first step of ergot alkaloid biosynthesis by condensing dimethylallyl diphosphate (DMAP) and tryptophan to form 4-dimethylallyl-L-tryptophan. The second step is catalyzed by the methyltransferase ifgB that methylates 4-dimethylallyl-L-tryptophan in the presence of S-adenosyl-L-methionine, resulting in the formation of N-methyl-dimethylallyl-L-tryptophan. The catalase ifgD and the FAD-dependent oxidoreductase ifgC then transform N-methyl-dimethylallyl-L-tryptophan to chanoclavine-I which is further oxidized by ifgE in the presence of NAD(+), resulting in the formation of chanoclavine-I aldehyde. The chanoclavine-I aldehyde reductases ifgG and/or fgaOx3 reduce chanoclavine-I aldehyde to dihydrochanoclavine-I aldehyde that spontaneously dehydrates to form 6,8-dimethyl-6,7-didehydroergoline. The festuclavine dehydrogenases ifgF1 and/or ifgF2 then catalyze the reduction of 6,8-dimethyl-6,7-didehydroergoline to form festuclavine. Hydrolysis of festuclavine by a yet undetermined cytochrome P450 monooxygenase (called ifgH) then leads to the formation of isofumigaclavine B which is in turn acetylated by ifgI to isofumigaclavine A. Penicillium roqueforti has interestingly at least two sets of genes for the consumption of chanoclavine-I aldehyde on three different loci, the OYEs ifgG/fgaOx3 and the festuclavine synthase homologs ifgF1/ifgF2. The reason for the duplication of these genes is unclear, probably to ensure the conversion of chanoclavine-I aldehyde by differential gene expression under various environmental conditions. In Penicillium roqueforti (strain FM164), this protein is Chanoclavine-I aldehyde reductase fgaOx3.